A 393-amino-acid chain; its full sequence is MAGRIQNTIRNFLDSESSGGLLLIASAAAALLVANSQLSEAYFGALHAYLGPLSVQHWVNDALMAVFFLMVGLEIKREMVDGHLSSWPRRILPGAAAAAGMAVPALVYLAFNLNNGAAHGWAIPAATDIAFALGVISLLGPRVPTSLKVFLAALAIIDDLGAVIVIGLFYTTGVSLMDLGLAAAGVAALVALNLSGVKRLTPYLLLGLVLWFFTYRSGVHATIAGVLLALTIPIKRTPAKPEATVSESPLHLLEHSLIKPVSFIIVPIFGFANAGVSFSGLGMEAFFAPVTMGVAAGLAIGKLVGIFGAVLLLVKTGIVGLPAGASWPQMLGTTLLCGIGFTMSLFISLLAFDDVLLQNEAKIGILIGSLVAGLAGFIVLRFSKRADGRNFSQ.

11 helical membrane passes run 18-38 (SGGLLLIASAAAALLVANSQL), 53-73 (LSVQHWVNDALMAVFFLMVGL), 91-111 (ILPGAAAAAGMAVPALVYLAF), 120-140 (GWAIPAATDIAFALGVISLLG), 149-169 (VFLAALAIIDDLGAVIVIGLF), 172-192 (TGVSLMDLGLAAAGVAALVAL), 208-228 (LVLWFFTYRSGVHATIAGVLL), 263-283 (FIIVPIFGFANAGVSFSGLGM), 294-314 (VAAGLAIGKLVGIFGAVLLLV), 332-352 (GTTLLCGIGFTMSLFISLLAF), and 363-383 (IGILIGSLVAGLAGFIVLRFS).

This sequence belongs to the NhaA Na(+)/H(+) (TC 2.A.33) antiporter family.

It localises to the cell inner membrane. The catalysed reaction is Na(+)(in) + 2 H(+)(out) = Na(+)(out) + 2 H(+)(in). In terms of biological role, na(+)/H(+) antiporter that extrudes sodium in exchange for external protons. The polypeptide is Na(+)/H(+) antiporter NhaA 2 (Brucella anthropi (strain ATCC 49188 / DSM 6882 / CCUG 24695 / JCM 21032 / LMG 3331 / NBRC 15819 / NCTC 12168 / Alc 37) (Ochrobactrum anthropi)).